A 46-amino-acid polypeptide reads, in one-letter code: Viscotoxin-A2 (46 aa).

Cystine bridges form between Cys-3–Cys-40, Cys-4–Cys-32, and Cys-16–Cys-26.

Belongs to the plant thionin (TC 1.C.44) family.

It is found in the secreted. Its function is as follows. Thionins are small plant proteins which are toxic to animal cells. They seem to exert their toxic effect at the level of the cell membrane. Their precise function is not known. The protein is Viscotoxin-A2 (THI2.3) of Viscum album (European mistletoe).